A 201-amino-acid polypeptide reads, in one-letter code: MSRYTGPSWRVSRRLGVSLSGTVKELARRAYAPGDHGRDRRGKLSEYGTQLREKQKLRFMYGMTERQFSNLFVRAGKIKEGTHGANFMALLERRLDNMVYRLGLATTRRQARQLVNHGHITVDGKRVDIPSYEVKVGQIIAVRDKSKNLDIIKNAVEAVVSRPSYVDFDADKLEGKLNRIPAREDMNADIDEALIVEFYNK.

The S4 RNA-binding domain occupies 93-156 (RRLDNMVYRL…KNLDIIKNAV (64 aa)).

This sequence belongs to the universal ribosomal protein uS4 family. As to quaternary structure, part of the 30S ribosomal subunit. Contacts protein S5. The interaction surface between S4 and S5 is involved in control of translational fidelity.

Functionally, one of the primary rRNA binding proteins, it binds directly to 16S rRNA where it nucleates assembly of the body of the 30S subunit. In terms of biological role, with S5 and S12 plays an important role in translational accuracy. This is Small ribosomal subunit protein uS4 from Limosilactobacillus reuteri subsp. reuteri (strain JCM 1112) (Lactobacillus reuteri).